Consider the following 329-residue polypeptide: Acetyl-coenzyme A carboxylase carboxyl transferase subunit alpha (329 aa).

Residues Gln-40–Glu-294 form the CoA carboxyltransferase C-terminal domain.

It belongs to the AccA family. In terms of assembly, acetyl-CoA carboxylase is a heterohexamer composed of biotin carboxyl carrier protein (AccB), biotin carboxylase (AccC) and two subunits each of ACCase subunit alpha (AccA) and ACCase subunit beta (AccD).

It is found in the cytoplasm. It catalyses the reaction N(6)-carboxybiotinyl-L-lysyl-[protein] + acetyl-CoA = N(6)-biotinyl-L-lysyl-[protein] + malonyl-CoA. It functions in the pathway lipid metabolism; malonyl-CoA biosynthesis; malonyl-CoA from acetyl-CoA: step 1/1. Functionally, component of the acetyl coenzyme A carboxylase (ACC) complex. First, biotin carboxylase catalyzes the carboxylation of biotin on its carrier protein (BCCP) and then the CO(2) group is transferred by the carboxyltransferase to acetyl-CoA to form malonyl-CoA. The sequence is that of Acetyl-coenzyme A carboxylase carboxyl transferase subunit alpha from Synechococcus sp. (strain CC9311).